A 112-amino-acid chain; its full sequence is Cytochrome c3 (112 aa).

Residues His-26, His-29, Cys-34, Cys-37, His-38, His-39, Cys-49, Cys-54, His-55, His-73, Cys-83, Cys-86, His-87, Cys-104, Cys-109, and His-110 each coordinate heme c.

Heme serves as cofactor.

In terms of biological role, participates in sulfate respiration coupled with phosphorylation by transferring electrons from the enzyme dehydrogenase to ferredoxin. The polypeptide is Cytochrome c3 (Megalodesulfovibrio gigas (strain ATCC 19364 / DSM 1382 / NCIMB 9332 / VKM B-1759) (Desulfovibrio gigas)).